A 259-amino-acid polypeptide reads, in one-letter code: Chloroplastic import inner membrane translocase subunit HP30-2 (259 aa).

The next 4 membrane-spanning stretches (helical) occupy residues 55-75 (AVVT…MGTL), 108-124 (NFAA…CVMK), 135-155 (AVVA…GLQG), and 158-178 (MNAI…FKLG).

Belongs to the Tim17/Tim22/Tim23 family. In terms of assembly, probable component of a protein-conducting channel made of HP30-1, HP30-2 and HP20 that mediates the import of transit sequence-less proteins into the chloroplastic inner membrane. Interacts with CEQORH.

It localises to the mitochondrion membrane. The protein localises to the plastid. The protein resides in the chloroplast inner membrane. Together with HP30-1 and HP20, triggers the import and insertion of transit sequence-less multi-pass transmembrane proteins (e.g. CEQORH) into the chloroplastic inner membrane. This chain is Chloroplastic import inner membrane translocase subunit HP30-2, found in Arabidopsis thaliana (Mouse-ear cress).